The primary structure comprises 557 residues: MAAQGFLLIATFLLVLMVLARPLGSGLARLINDIPLPGTTGVERVLFSALGVSDREMNWKQYLSAILGLNILGLAVLFFMLLGQHYLPLNPQQLPGLSWDLALNTAVSFVTNTNWQSYSGETTLSYFSQMAGLTVQNFLSAASGIAVIFALIRAFTRQSMNTLGNAWVDLLRITLWVLTPVALLIALFFIQQGALQNFLPYQAVTTIEGAQQLLPMGPVASQEAIKMLGTNGGGFFNANSSHPFENPTVLTNFVQMLAIFLIPTALCFAFGEVAGDRRQGRMLLWAMSVIFVICVGVVMWAEVQGNPHLLALGADSSINMEGKESRFGVLVSSLFAVVTTAASCGAVIAMHDSFTALGGMVPMWLMQIGEVVFGGVGSGLYGMMLFVLLAVFIAGLMIGRTPEYLGKKIDVREMKLTALAILVTPTLVLMGAALAMMTDAGRSAMLNPGPHGFSEVLYAVSSAANNNGSAFAGLSANSPFWNCLLALCMFVGRFGVIIPVMAIAGSLVSKKSQPASSGTLPTHGPLFVGLLIGTVLLVGALTFIPALALGPVAEYLS.

Helical transmembrane passes span 5–25 (GFLLIATFLLVLMVLARPLGS), 63–83 (LSAILGLNILGLAVLFFMLLG), 132–152 (GLTVQNFLSAASGIAVIFALI), 170–190 (LLRITLWVLTPVALLIALFFI), 253–273 (FVQMLAIFLIPTALCFAFGEV), 283–303 (LLWAMSVIFVICVGVVMWAEV), 329–349 (VLVSSLFAVVTTAASCGAVIA), 356–376 (ALGGMVPMWLMQIGEVVFGGV), 379–399 (GLYGMMLFVLLAVFIAGLMIG), 416–436 (LTALAILVTPTLVLMGAALAM), 484–504 (LLALCMFVGRFGVIIPVMAIA), and 526–546 (LFVGLLIGTVLLVGALTFIPA).

It belongs to the KdpA family. In terms of assembly, the system is composed of three essential subunits: KdpA, KdpB and KdpC.

It localises to the cell inner membrane. Functionally, part of the high-affinity ATP-driven potassium transport (or Kdp) system, which catalyzes the hydrolysis of ATP coupled with the electrogenic transport of potassium into the cytoplasm. This subunit binds the periplasmic potassium ions and delivers the ions to the membrane domain of KdpB through an intramembrane tunnel. The polypeptide is Potassium-transporting ATPase potassium-binding subunit (Escherichia coli O6:K15:H31 (strain 536 / UPEC)).